A 438-amino-acid chain; its full sequence is UDP-N-acetylglucosamine 1-carboxyvinyltransferase (438 aa).

Position 35-36 (35-36 (KN)) interacts with phosphoenolpyruvate. Arg-105 contributes to the UDP-N-acetyl-alpha-D-glucosamine binding site. Cys-129 serves as the catalytic Proton donor. Residue Cys-129 is modified to 2-(S-cysteinyl)pyruvic acid O-phosphothioketal. UDP-N-acetyl-alpha-D-glucosamine contacts are provided by residues 134 to 138 (RPVDL), Asp-321, and Val-343.

The protein belongs to the EPSP synthase family. MurA subfamily.

It is found in the cytoplasm. The enzyme catalyses phosphoenolpyruvate + UDP-N-acetyl-alpha-D-glucosamine = UDP-N-acetyl-3-O-(1-carboxyvinyl)-alpha-D-glucosamine + phosphate. The protein operates within cell wall biogenesis; peptidoglycan biosynthesis. In terms of biological role, cell wall formation. Adds enolpyruvyl to UDP-N-acetylglucosamine. In Synechocystis sp. (strain ATCC 27184 / PCC 6803 / Kazusa), this protein is UDP-N-acetylglucosamine 1-carboxyvinyltransferase.